The following is a 322-amino-acid chain: tRNA pseudouridine synthase B (322 aa).

The span at 1–11 shows a compositional bias: basic and acidic residues; it reads MRPPRTTELDR. The tract at residues 1 to 22 is disordered; sequence MRPPRTTELDRPMTTAASQRPR. The active-site Nucleophile is D65.

The protein belongs to the pseudouridine synthase TruB family. Type 1 subfamily.

The catalysed reaction is uridine(55) in tRNA = pseudouridine(55) in tRNA. Its function is as follows. Responsible for synthesis of pseudouridine from uracil-55 in the psi GC loop of transfer RNAs. This chain is tRNA pseudouridine synthase B, found in Burkholderia lata (strain ATCC 17760 / DSM 23089 / LMG 22485 / NCIMB 9086 / R18194 / 383).